The primary structure comprises 237 residues: Ribosomal RNA small subunit methyltransferase G (237 aa).

S-adenosyl-L-methionine is bound by residues Gly-78, Phe-83, Ala-129–Glu-130, and Arg-148. A disordered region spans residues Ser-216 to Leu-237.

The protein belongs to the methyltransferase superfamily. RNA methyltransferase RsmG family.

The protein resides in the cytoplasm. Specifically methylates the N7 position of a guanine in 16S rRNA. The chain is Ribosomal RNA small subunit methyltransferase G from Streptococcus agalactiae serotype V (strain ATCC BAA-611 / 2603 V/R).